A 136-amino-acid chain; its full sequence is Small ribosomal subunit protein uS8 (136 aa).

This sequence belongs to the universal ribosomal protein uS8 family. In terms of assembly, part of the 30S ribosomal subunit. Contacts proteins S5 and S12.

One of the primary rRNA binding proteins, it binds directly to 16S rRNA central domain where it helps coordinate assembly of the platform of the 30S subunit. This chain is Small ribosomal subunit protein uS8, found in Sulfurihydrogenibium sp. (strain YO3AOP1).